Here is a 160-residue protein sequence, read N- to C-terminus: Cytochrome b6-f complex subunit 4 (160 aa).

The next 3 membrane-spanning stretches (helical) occupy residues Leu36–Val56, Leu95–Glu115, and Ser131–Ile151.

It belongs to the cytochrome b family. PetD subfamily. As to quaternary structure, the 4 large subunits of the cytochrome b6-f complex are cytochrome b6, subunit IV (17 kDa polypeptide, PetD), cytochrome f and the Rieske protein, while the 4 small subunits are PetG, PetL, PetM and PetN. The complex functions as a dimer.

Its subcellular location is the cellular thylakoid membrane. Functionally, component of the cytochrome b6-f complex, which mediates electron transfer between photosystem II (PSII) and photosystem I (PSI), cyclic electron flow around PSI, and state transitions. This is Cytochrome b6-f complex subunit 4 from Prochlorococcus marinus (strain NATL2A).